The sequence spans 659 residues: QWRF motif-containing protein 2 (659 aa).

Disordered stretches follow at residues 1 to 125, 157 to 221, 291 to 317, 340 to 359, and 371 to 429; these read MVAA…SVTV, SKKK…LDCG, DTDS…ISKS, RLQD…TSSI, and SDAV…NAYN. The segment covering 42–72 has biased composition (low complexity); that stretch reads SPSPSHSVSSTTTTTTTTTTTTSSSSSSSSS. Residues 90-102 show a composition bias toward polar residues; it reads RSTTNSASNSIKT. Basic and acidic residues predominate over residues 172 to 190; sequence STPERRRSTPVRDQRENSK. Composition is skewed to polar residues over residues 206-216 and 291-303; these read SESVVPNSLSR and DTDS…TNGV. Low complexity-rich tracts occupy residues 345-359 and 401-418; these read GSPL…TSSI and ATTT…SRAR. The short motif at 468–471 is the QWRF motif element; the sequence is QWRF.

It belongs to the QWRF family.

In Arabidopsis thaliana (Mouse-ear cress), this protein is QWRF motif-containing protein 2 (QWRF2).